A 71-amino-acid chain; its full sequence is Conotoxin Bu25 (71 aa).

The first 21 residues, 1–21, serve as a signal peptide directing secretion; that stretch reads MGMRMMVTVFPLVVLATTVVS. Positions 22-44 are excised as a propeptide; the sequence is LRSNRASDGRRGIVNKLNDLVPK. An Arginine amide modification is found at arginine 70.

This sequence belongs to the conotoxin A superfamily. Post-translationally, contains 3 disulfide bonds. They are not indicated here, since framework IV presents two different connectivities (I-V, II-III, IV-VI and I-III, II-V, IV-VI). As to expression, expressed by the venom duct.

Its subcellular location is the secreted. The chain is Conotoxin Bu25 from Conus bullatus (Bubble cone).